The chain runs to 374 residues: tRNA-specific 2-thiouridylase MnmA (374 aa).

ATP is bound by residues Gly12–Ser19 and Met38. The interval Asn98 to Asp100 is interaction with target base in tRNA. Cys103 serves as the catalytic Nucleophile. The cysteines at positions 103 and 202 are disulfide-linked. Gly128 lines the ATP pocket. The segment at Lys152–Gln154 is interaction with tRNA. The Cysteine persulfide intermediate role is filled by Cys202. The segment at Arg316–Tyr317 is interaction with tRNA.

It belongs to the MnmA/TRMU family.

The protein resides in the cytoplasm. It carries out the reaction S-sulfanyl-L-cysteinyl-[protein] + uridine(34) in tRNA + AH2 + ATP = 2-thiouridine(34) in tRNA + L-cysteinyl-[protein] + A + AMP + diphosphate + H(+). Its function is as follows. Catalyzes the 2-thiolation of uridine at the wobble position (U34) of tRNA, leading to the formation of s(2)U34. This is tRNA-specific 2-thiouridylase MnmA from Vibrio parahaemolyticus serotype O3:K6 (strain RIMD 2210633).